The primary structure comprises 223 residues: Enolase-phosphatase E1 (223 aa).

It belongs to the HAD-like hydrolase superfamily. MasA/MtnC family. In terms of assembly, monomer. Mg(2+) is required as a cofactor.

The enzyme catalyses 5-methylsulfanyl-2,3-dioxopentyl phosphate + H2O = 1,2-dihydroxy-5-(methylsulfanyl)pent-1-en-3-one + phosphate. The protein operates within amino-acid biosynthesis; L-methionine biosynthesis via salvage pathway; L-methionine from S-methyl-5-thio-alpha-D-ribose 1-phosphate: step 3/6. Its pathway is amino-acid biosynthesis; L-methionine biosynthesis via salvage pathway; L-methionine from S-methyl-5-thio-alpha-D-ribose 1-phosphate: step 4/6. Functionally, bifunctional enzyme that catalyzes the enolization of 2,3-diketo-5-methylthiopentyl-1-phosphate (DK-MTP-1-P) into the intermediate 2-hydroxy-3-keto-5-methylthiopentenyl-1-phosphate (HK-MTPenyl-1-P), which is then dephosphorylated to form the acireductone 1,2-dihydroxy-3-keto-5-methylthiopentene (DHK-MTPene). The protein is Enolase-phosphatase E1 of Aquifex aeolicus (strain VF5).